The chain runs to 859 residues: Linoleate 9S-lipoxygenase B (859 aa).

The 125-residue stretch at 34-158 folds into the PLAT domain; it reads INIGASVVDG…RYKSDRIFFA (125 aa). The Lipoxygenase domain maps to 161–859; sequence AYLPSETPQP…GKGIPNSVSI (699 aa). Positions 213–246 are disordered; that stretch reads EYARPILGGSSEYPYPRRGRTGREPTKADPNCES. The span at 233 to 244 shows a compositional bias: basic and acidic residues; the sequence is TGREPTKADPNC. Positions 521, 526, 711, and 859 each coordinate Fe cation.

Belongs to the lipoxygenase family. As to quaternary structure, monomer. Requires Fe cation as cofactor. In terms of tissue distribution, fruit specific.

It is found in the cytoplasm. It carries out the reaction (9Z,12Z)-octadecadienoate + O2 = (9S)-hydroperoxy-(10E,12Z)-octadecadienoate. It participates in lipid metabolism; oxylipin biosynthesis. In terms of biological role, plant lipoxygenase may be involved in a number of diverse aspects of plant physiology including growth and development, pest resistance, and senescence or responses to wounding. It catalyzes the hydroperoxidation of lipids containing a cis,cis-1,4-pentadiene structure. The sequence is that of Linoleate 9S-lipoxygenase B (LOX1.2) from Solanum lycopersicum (Tomato).